The following is a 266-amino-acid chain: Putative carbamate hydrolase RutD (266 aa).

An AB hydrolase-1 domain is found at 15-239 (PVVVLSAGLG…RVEMPWGGHA (225 aa)).

This sequence belongs to the AB hydrolase superfamily. Hydrolase RutD family.

The enzyme catalyses carbamate + 2 H(+) = NH4(+) + CO2. Its function is as follows. Involved in pyrimidine catabolism. May facilitate the hydrolysis of carbamate, a reaction that can also occur spontaneously. The chain is Putative carbamate hydrolase RutD from Klebsiella variicola (strain At-22).